The sequence spans 576 residues: Low-affinity glucose transporter HXT4 (576 aa).

Positions 1 to 56 (MSEEAAYQEDTAVQNTPADALSPVESDSNSALSTPSNKAERDDMKDFDENHEESNN) are disordered. The Cytoplasmic segment spans residues 1–66 (MSEEAAYQED…YVEIPKKPAS (66 aa)). Positions 25–37 (ESDSNSALSTPSN) are enriched in polar residues. A compositionally biased stretch (basic and acidic residues) spans 38-54 (KAERDDMKDFDENHEES). Lysine 45 participates in a covalent cross-link: Glycyl lysine isopeptide (Lys-Gly) (interchain with G-Cter in ubiquitin). A helical transmembrane segment spans residues 67 to 87 (AYVTVSICCLMVAFGGFVFGW). The Extracellular segment spans residues 88–122 (DTGTISGFVAQTDFIRRFGMKHHDGTYYLSKVRTG). Residues 123 to 143 (LIVSIFNIGCAIGGIILAKLG) form a helical membrane-spanning segment. The Cytoplasmic portion of the chain corresponds to 144 to 149 (DMYGRK). Residues 150–170 (MGLIVVVVIYIIGIIIQIASI) traverse the membrane as a helical segment. Topologically, residues 171–180 (NKWYQYFIGR) are extracellular. Residues 181 to 201 (IISGLGVGGIAVLSPMLISEV) form a helical membrane-spanning segment. The Cytoplasmic portion of the chain corresponds to 202–207 (SPKHIR). The helical transmembrane segment at 208 to 228 (GTLVSCYQLMITLGIFLGYCT) threads the bilayer. Residues 229 to 242 (NYGTKTYTNSVQWR) are Extracellular-facing. A helical membrane pass occupies residues 243-263 (VPLGLGFAWALFMIGGMTFVP). The Cytoplasmic segment spans residues 264 to 346 (ESPRYLVEVG…IQSLQQLTGD (83 aa)). Residues 347 to 363 (NYFFYYGTTVFTAVGLE) traverse the membrane as a helical segment. The Extracellular segment spans residues 364–369 (DSFETS). Residues 370 to 387 (IVLGIVNFASTFVGIFLV) form a helical membrane-spanning segment. Residues 388 to 394 (ERYGRRR) lie on the Cytoplasmic side of the membrane. A helical transmembrane segment spans residues 395-415 (CLLWGAASMTACMVVFASVGV). The Extracellular portion of the chain corresponds to 416 to 437 (TRLWPNGKKNGSSKGAGNCMIV). Residue asparagine 425 is glycosylated (N-linked (GlcNAc...) asparagine). The helical transmembrane segment at 438–458 (FTCFYLFCFATTWAPIPFVVN) threads the bilayer. Residues 459 to 475 (SETFPLRVKSKCMAIAQ) lie on the Cytoplasmic side of the membrane. A helical transmembrane segment spans residues 476-496 (ACNWIWGFLIGFFTPFISGAI). Position 497 (aspartate 497) is a topological domain, extracellular. A helical membrane pass occupies residues 498–518 (FYYGYVFMGCLVFSYFYVFFF). Residues 519 to 576 (VPETKGLTLEEVNTLWEEGVLPWKSPSWVPPNKRGTDYNADDLMHDDQPFYKKMFGKK) lie on the Cytoplasmic side of the membrane.

The protein belongs to the major facilitator superfamily. Sugar transporter (TC 2.A.1.1) family.

It localises to the cell membrane. Xylose uptake is strongly inhibited by glucose. Its function is as follows. Low-affinity glucose transporter. Can also transport xylose. This chain is Low-affinity glucose transporter HXT4 (HXT4), found in Saccharomyces cerevisiae (strain ATCC 204508 / S288c) (Baker's yeast).